The sequence spans 271 residues: MRNDVHLGHKARKRFGQNFLNDPYIIDGIVSSINPLPGQNLVEIGPGLGAITEPVGKLVDKFTVIELDRDLAERLRNHPDLAEKLTIYEGDAMKFDFEQLVKPNNKLRIFGNLPYNISTPLMFHLFEFHKDVQDMHFMLQKEVVNRLAAGPGTKAYGRLTVMAQYYCKVTPVLEVPPTAFVPPPKVDSAVVRLQPYEVLPYPAKDLKWLDRVCREGFNQRRKTVRNCYKSLIDKEVLEELGVNPGMRPENLTLEQFVDMANWLHDSHNADK.

The S-adenosyl-L-methionine site is built by Asn-18, Leu-20, Gly-45, Glu-66, Asp-91, and Asn-112.

This sequence belongs to the class I-like SAM-binding methyltransferase superfamily. rRNA adenine N(6)-methyltransferase family. RsmA subfamily.

It is found in the cytoplasm. It catalyses the reaction adenosine(1518)/adenosine(1519) in 16S rRNA + 4 S-adenosyl-L-methionine = N(6)-dimethyladenosine(1518)/N(6)-dimethyladenosine(1519) in 16S rRNA + 4 S-adenosyl-L-homocysteine + 4 H(+). Specifically dimethylates two adjacent adenosines (A1518 and A1519) in the loop of a conserved hairpin near the 3'-end of 16S rRNA in the 30S particle. May play a critical role in biogenesis of 30S subunits. In Vibrio atlanticus (strain LGP32) (Vibrio splendidus (strain Mel32)), this protein is Ribosomal RNA small subunit methyltransferase A.